The primary structure comprises 468 residues: MFNSIGVIGLGVMGSNIALNMANKGENVAVYNYTRDLTDQLIQKLDGQSLSPYYELEDFVQSLEKPRKIFLMVTAGKPVDSVIQSLKPLLEEGDVIMDGGNSHYEDTERRYDELKEKGIGYLGVGISGGEVGALTGPSIMPGGDRDVYEKAAPILTKIAAQVGDDPCCVYIGPKGAGHFTKMVHNGIEYADMQLIAEAYTFLRETLRLPLDEIASIFETWNQGELKSYLIEITAEILRKKDEKTGQPLIDVILDKTGQKGTGKWTSMQAIDNGIPSTIITESLFARYLSSLKEERMAAQDVLAGPEAEEKHLDKDTWIEYVRQALYMGKVCAYAQGFAQYKMSSELYGWNLPLKDIALIFRGGCIIRADFLNVISEAFSEQPNLANLLIAPYFTDKLHAYQTGLRKVVCEGISTGISFPCLTTALSYYDGYRTGRSNANLLQAQRDYFGAHTYERTDMDGVFHTNWSE.

Residues 9 to 14, 32 to 34, 73 to 75, and Asn101 each bind NAD(+); these read GLGVMG, NYT, and VTA. Substrate contacts are provided by residues Asn101 and 127–129; that span reads SGG. Lys181 acts as the Proton acceptor in catalysis. 184–185 contacts substrate; it reads HN. Glu188 (proton donor) is an active-site residue. Residues Tyr189, Lys259, Arg286, Arg445, and His451 each contribute to the substrate site.

This sequence belongs to the 6-phosphogluconate dehydrogenase family. In terms of assembly, homodimer.

It catalyses the reaction 6-phospho-D-gluconate + NAD(+) = D-ribulose 5-phosphate + CO2 + NADH. Functionally, catalyzes the oxidative decarboxylation of 6-phosphogluconate to ribulose 5-phosphate and CO(2), with concomitant reduction of NAD to NADH. Does not contribute to oxidative pentose phosphate (PP) pathway fluxes during growth on glucose. The functional role of GntZ remains obscure. The polypeptide is 6-phosphogluconate dehydrogenase, NAD(+)-dependent, decarboxylating (gntZ) (Bacillus subtilis (strain 168)).